We begin with the raw amino-acid sequence, 495 residues long: MGTQKVTVSLIFALSIATIGSFQFGYNTGVINAPETIIKDFLNYTLEEKSENLPTEVLLTSLWSLSVAIFSVGGMIGSFSVGLFVNRFGRRNSMLMVNLLAVAGGCLMGFCKIAQSVEMLILGRLIIGLFCGLCTGFVPMYIGEISPTALRGAFGTLNQLGIVIGILVAQIFGLKVIMGTEELWPLLLGFTIIPAVLQSAALPFCPESPRFLLINRKEEENAKEILQRLWGTQDVSQDIQEMKDESARMAQEKQVTVLELFRSRSYRQPIIISIMLQLSQQLSGINAVFYYSTGIFKDAGVEEPIYATIGAGVVNTIFTVVSLFLVERAGRRTLHMIGLGGMAVCSILMTISLLLKDNYNWMSFVCIGAILVFVAFFEIGPGPIPWFIVAELFSQGPRPAAMAVAGCSNWTSNFLVGLLFPSAAFYLGAYVFIIFTGFLIVFLVFTFFKVPETRGRTFEEITRAFEGQGQDANRAEKGPIVEMNSMQPVKETATV.

The Cytoplasmic segment spans residues 1–10 (MGTQKVTVSL). The helical transmembrane segment at 11–32 (IFALSIATIGSFQFGYNTGVIN) threads the bilayer. Residues 33–64 (APETIIKDFLNYTLEEKSENLPTEVLLTSLWS) lie on the Extracellular side of the membrane. The N-linked (GlcNAc...) asparagine glycan is linked to Asn43. The helical transmembrane segment at 65 to 85 (LSVAIFSVGGMIGSFSVGLFV) threads the bilayer. The Cytoplasmic segment spans residues 86–90 (NRFGR). The chain crosses the membrane as a helical span at residues 91-111 (RNSMLMVNLLAVAGGCLMGFC). Over 112-118 (KIAQSVE) the chain is Extracellular. Residues 119 to 142 (MLILGRLIIGLFCGLCTGFVPMYI) form a helical membrane-spanning segment. Residues 143–153 (GEISPTALRGA) are Cytoplasmic-facing. Residues 154 to 174 (FGTLNQLGIVIGILVAQIFGL) traverse the membrane as a helical segment. Gln159 serves as a coordination point for D-glucose. Residues 175–183 (KVIMGTEEL) lie on the Extracellular side of the membrane. The helical transmembrane segment at 184–204 (WPLLLGFTIIPAVLQSAALPF) threads the bilayer. Residues 205-269 (CPESPRFLLI…LFRSRSYRQP (65 aa)) are Cytoplasmic-facing. Phosphothreonine is present on Thr232. The helical transmembrane segment at 270-290 (IIISIMLQLSQQLSGINAVFY) threads the bilayer. Positions 277–279 (QLS) are important for selectivity against fructose. D-glucose-binding positions include 280 to 281 (QQ) and Asn286. Residues 291–304 (YSTGIFKDAGVEEP) lie on the Extracellular side of the membrane. The chain crosses the membrane as a helical span at residues 305-325 (IYATIGAGVVNTIFTVVSLFL). Asn315 is a D-glucose binding site. At 326 to 331 (VERAGR) the chain is on the cytoplasmic side. A helical transmembrane segment spans residues 332–352 (RTLHMIGLGGMAVCSILMTIS). Topologically, residues 353–363 (LLLKDNYNWMS) are extracellular. A helical transmembrane segment spans residues 364–389 (FVCIGAILVFVAFFEIGPGPIPWFIV). D-glucose contacts are provided by Glu378 and Trp386. Residues 390 to 399 (AELFSQGPRP) are Cytoplasmic-facing. A helical membrane pass occupies residues 400-420 (AAMAVAGCSNWTSNFLVGLLF). Residues 421–429 (PSAAFYLGA) are Extracellular-facing. A helical membrane pass occupies residues 430-450 (YVFIIFTGFLIVFLVFTFFKV). The Cytoplasmic portion of the chain corresponds to 451–495 (PETRGRTFEEITRAFEGQGQDANRAEKGPIVEMNSMQPVKETATV). Phosphoserine is present on Ser485. Phosphothreonine is present on Thr492.

The protein belongs to the major facilitator superfamily. Sugar transporter (TC 2.A.1.1) family. Glucose transporter subfamily. As to quaternary structure, interacts with SMIM43; the interaction may promote SLC2A3-mediated glucose transport to meet the energy needs of mesendoderm differentiation.

It is found in the cell membrane. The protein resides in the perikaryon. It localises to the cell projection. The catalysed reaction is D-glucose(out) = D-glucose(in). It carries out the reaction D-galactose(in) = D-galactose(out). Deoxyglucose transport is inhibited by D-glucose, D-galactose and maltose. Galactose transport is inhibited by D-glucose and maltose. Functionally, facilitative glucose transporter. Can also mediate the uptake of various other monosaccharides across the cell membrane. Mediates the uptake of glucose, 2-deoxyglucose, galactose, mannose, xylose and fucose, and probably also dehydroascorbate. Does not mediate fructose transport. Required for mesendoderm differentiation. The sequence is that of Solute carrier family 2, facilitated glucose transporter member 3 from Canis lupus familiaris (Dog).